Consider the following 2890-residue polypeptide: Bifunctional DNA-directed RNA polymerase subunit beta-beta' (2890 aa).

Residues 1-1377 are DNA-directed RNA polymerase subunit beta; it reads MSKKIPLKNR…DINIFGDEMD (1377 aa). Residues 1384–2890 form a DNA-directed RNA polymerase subunit beta' region; the sequence is PIVIKEDDRP…LRTIEDSPKI (1507 aa). C1449, C1451, C1465, and C1468 together coordinate Zn(2+). Mg(2+)-binding residues include D1849, D1851, and D1853. Positions 2179, 2253, 2260, and 2263 each coordinate Zn(2+).

In the N-terminal section; belongs to the RNA polymerase beta chain family. The protein in the C-terminal section; belongs to the RNA polymerase beta' chain family. The RNAP catalytic core consists of 2 alpha, 1 beta/beta' and 1 omega subunit. When a sigma factor is associated with the core the holoenzyme is formed, which can initiate transcription. The cofactor is Mg(2+). Requires Zn(2+) as cofactor.

It carries out the reaction RNA(n) + a ribonucleoside 5'-triphosphate = RNA(n+1) + diphosphate. In terms of biological role, DNA-dependent RNA polymerase catalyzes the transcription of DNA into RNA using the four ribonucleoside triphosphates as substrates. This Helicobacter acinonychis (strain Sheeba) protein is Bifunctional DNA-directed RNA polymerase subunit beta-beta' (rpoBC).